The chain runs to 449 residues: Transcription factor AP-2 gamma (449 aa).

Lys-10 is covalently cross-linked (Glycyl lysine isopeptide (Lys-Gly) (interchain with G-Cter in SUMO)). A disordered region spans residues 13-58; sequence EDCEDRHDSSSNGNPRIPHLSSPGQHLYSPAPPLSHTGVAEYQPPP. A PPxY motif motif is present at residues 59–64; sequence YFPPPY. A disordered region spans residues 94–130; the sequence is AATGSQQQAWPGRQSQEGSSLASHHSRSASLIPHISG. Over residues 95 to 111 the composition is skewed to polar residues; the sequence is ATGSQQQAWPGRQSQEG. A compositionally biased stretch (low complexity) spans 112 to 124; it reads SSLASHHSRSASL. Ser-251 is subject to Phosphoserine; by PKA. Positions 292-423 are H-S-H (helix-span-helix), dimerization; it reads RRKAAHVTLL…YIKEALIAID (132 aa). Positions 426–449 are disordered; it reads YMNPGDQSPADSSKTMEKMEKHRK. Phosphoserine is present on Ser-433. Basic and acidic residues predominate over residues 439 to 449; sequence KTMEKMEKHRK.

It belongs to the AP-2 family. As to quaternary structure, binds DNA as a dimer. Can form homodimers or heterodimers with other AP-2 family members. Interacts with WWOX. Interacts with UBE2I. Interacts with KCTD1; this interaction represses transcription activation. Interacts with CITED2 (via C-terminus); the interaction stimulates TFAP2B-transcriptional activity. Interacts with CITED4. Interacts with MTA1. In terms of processing, sumoylated on Lys-10; which inhibits transcriptional activity. As to expression, expressed in lung, ovary and testis. Expressed in most squamous epithelia. Also, detected in several exocrine glands including the prostate, the preputial and salivary glands, serous glands of the tongue and ocular harderian glands.

It is found in the nucleus. Sequence-specific DNA-binding transcription factor that interacts with cellular enhancer elements to regulate transcription of selected genes, and which plays a key role in early embryonic development. AP-2 factors bind to the consensus sequence 5'-GCCNNNGGC-3' and activate genes involved in a large spectrum of important biological functions. TFAP2C plays a key role in early embryonic development by regulating both inner cell mass (ICM) and trophectoderm differentiation. At the 8-cell stage, during morula development, controls expression of cell-polarity genes. Upon trophoblast commitment, binds to late trophectoderm genes in blastocysts together with CDX2, and later to extra-embryonic ectoderm genes together with SOX2. Binds to both closed and open chromatin with other transcription factors. This chain is Transcription factor AP-2 gamma, found in Mus musculus (Mouse).